Reading from the N-terminus, the 475-residue chain is MAAPRPPPARLSGIMVPAPIQDLEALRALTALFKEQRNRETAPRTIFQRVLDILKKSSHAVELACRDPSQVENLASSLQLITECFRCLRNACIECSVNQNSIRNLDTIGVAVDLILLFRELRVEQEALLTAFRCGLQFLGNIASRNEDSQSIVWVHAFPELFLSCLNHPDKKIVAYSSMILFTSLNHERMKELEENLNIAIDVIDAYQKHPESEWPVLIITDLFLKSPELVQAMFPKLNNQERVTLLDLMIAKITSDEPLTTDDIPVFLRHAELIASTFVDQCKTVLKLASEEPPDDEEALATIRLLDVLCEMTANTELLGYLQVFPGLLERVIDLLRVIHVTGKETTNIFSNCGCVRAEGDISNVAEGFKSHLIRLIGNLCYKNKDNQDKVNELDGIPLILDNCNISDSNPFLTQWVIYAIRNLTEDNSQNQDLIAKMEEQGLADASLLKKVGFEVEKKGEKLILKSTRDTPKP.

An Omega-N-methylarginine modification is found at R10. A phosphoserine mark is found at S12 and S77. Residue T82 is modified to Phosphothreonine. Position 430 is a phosphoserine (S430).

It belongs to the ataxin-10 family. In terms of assembly, homooligomer. Interacts with GNB2. Interacts with IQCB1. Interacts with OGT. In terms of processing, polyubiquitinated. Post-translationally, phosphorylation at Ser-12 by AURKB promotes the association of ATXN10 with PLK1. Phosphorylation at Ser-77 and Thr-82 by PLK1 may play a role in the regulation of cytokinesis and may stimulate the proteasome-mediated degradation of ATXN10.

Its subcellular location is the cytoplasm. The protein resides in the perinuclear region. It is found in the midbody. It localises to the cytoskeleton. The protein localises to the cilium basal body. Its subcellular location is the microtubule organizing center. The protein resides in the centrosome. It is found in the centriole. Its function is as follows. May play a role in the regulation of cytokinesis. May play a role in signaling by stimulating protein glycosylation. Induces neuritogenesis by activating the Ras-MAP kinase pathway and is necessary for the survival of cerebellar neurons. Does not appear to play a major role in ciliogenesis. This Macaca fascicularis (Crab-eating macaque) protein is Ataxin-10 (ATXN10).